An 814-amino-acid polypeptide reads, in one-letter code: Acyl-coenzyme A dehydrogenase (814 aa).

Glutamate 497 serves as the catalytic Proton acceptor.

The protein belongs to the acyl-CoA dehydrogenase family. FAD is required as a cofactor.

The catalysed reaction is a medium-chain 2,3-saturated fatty acyl-CoA + oxidized [electron-transfer flavoprotein] + H(+) = a medium-chain (2E)-enoyl-CoA + reduced [electron-transfer flavoprotein]. It carries out the reaction a long-chain 2,3-saturated fatty acyl-CoA + oxidized [electron-transfer flavoprotein] + H(+) = a long-chain (2E)-enoyl-CoA + reduced [electron-transfer flavoprotein]. The protein operates within lipid metabolism; fatty acid beta-oxidation. Functionally, catalyzes the dehydrogenation of acyl-coenzymes A (acyl-CoAs) to 2-enoyl-CoAs, the first step of the beta-oxidation cycle of fatty acid degradation. Is required for S.typhimurium to utilize medium- and long-chain fatty acids as sole carbon sources for growth. Is needed for bacterial survival during carbone-source starvation. The chain is Acyl-coenzyme A dehydrogenase (fadE) from Salmonella typhimurium (strain LT2 / SGSC1412 / ATCC 700720).